A 607-amino-acid chain; its full sequence is Hemagglutinin glycoprotein (607 aa).

The Intravirion portion of the chain corresponds to 1–37 (MLSYQDKVGAFYKDNARANSSKLSLVTEEQGGRRPPY). A helical transmembrane segment spans residues 38 to 58 (LLFVLLILLVGIMALLAITGV). The Virion surface portion of the chain corresponds to 59-607 (RFHQVSTSNM…IRFSCSRSKP (549 aa)). 6 N-linked (GlcNAc...) asparagine; by host glycosylation sites follow: Asn-149, Asn-309, Asn-391, Asn-422, Asn-456, and Asn-587.

Belongs to the paramyxoviruses hemagglutinin-neuraminidase family. Non-sialidase subfamily. As to quaternary structure, binds canine SLAMF1 at the cell surface.

The protein resides in the virion membrane. It localises to the host cell membrane. Attaches the virus to cell receptors and thereby initiating infection. Binding of H protein to the receptor induces a conformational change that allows the F protein to trigger virion/cell membranes fusion. The cellular receptor might be SLAM, and may explain the lymphotropism of the virus. This Canine distemper virus (strain A92-6) (CDV) protein is Hemagglutinin glycoprotein (H).